The sequence spans 345 residues: Succinylglutamate desuccinylase (345 aa).

Residues H63, E66, and H160 each contribute to the Zn(2+) site. Residue E224 is part of the active site.

It belongs to the AspA/AstE family. Succinylglutamate desuccinylase subfamily. Zn(2+) is required as a cofactor.

The enzyme catalyses N-succinyl-L-glutamate + H2O = L-glutamate + succinate. The protein operates within amino-acid degradation; L-arginine degradation via AST pathway; L-glutamate and succinate from L-arginine: step 5/5. Its function is as follows. Transforms N(2)-succinylglutamate into succinate and glutamate. This Shewanella woodyi (strain ATCC 51908 / MS32) protein is Succinylglutamate desuccinylase.